A 141-amino-acid chain; its full sequence is Small ribosomal subunit protein eS17w (141 aa).

It belongs to the eukaryotic ribosomal protein eS17 family.

The polypeptide is Small ribosomal subunit protein eS17w (RPS17D) (Arabidopsis thaliana (Mouse-ear cress)).